A 142-amino-acid chain; its full sequence is Glia maturation factor gamma (142 aa).

N-acetylserine is present on serine 2. In terms of domain architecture, ADF-H spans serine 4 to alanine 139.

Belongs to the actin-binding proteins ADF family. GMF subfamily.

This is Glia maturation factor gamma (Gmfg) from Mus musculus (Mouse).